Reading from the N-terminus, the 179-residue chain is Transcription factor 21 (179 aa).

The tract at residues 23 to 87 (IKLDPNKEFG…QVQRNAANAR (65 aa)) is disordered. The span at 34-46 (SNDSNEESSTCDN) shows a compositional bias: polar residues. Residues 50–64 (KKGRGTSGKRRKAPS) are compositionally biased toward basic residues. The segment covering 70 to 80 (GNINQEGKQVQ) has biased composition (polar residues). The bHLH domain occupies 79–131 (VQRNAANARERARMRVLSKAFSRLKTTLPWVPPDTKLSKLDTLRLASSYIAHL).

Efficient DNA binding requires dimerization with another bHLH protein.

Its subcellular location is the nucleus. Functionally, involved in epithelial-mesenchymal interactions in kidney and lung morphogenesis that include epithelial differentiation and branching morphogenesis. The polypeptide is Transcription factor 21 (tcf21) (Xenopus tropicalis (Western clawed frog)).